The primary structure comprises 196 residues: Interleukin-23 subunit alpha (196 aa).

Residues 1 to 21 (MLDCRAVIMLWLLPWVTQGLA) form the signal peptide.

Belongs to the IL-6 superfamily. As to quaternary structure, heterodimer with IL12B; disulfide-linked. The heterodimer is known as interleukin IL-23. Interacts with IL23R; this interaction enables recruitment of IL12RB1. In terms of tissue distribution, secreted by activated dendritic cells (at protein level). Detected in various tissues with higher expression in polarized Th1 cells and activated macrophages.

It is found in the secreted. Its function is as follows. Associates with IL12B to form the IL-23 interleukin, a heterodimeric cytokine which functions in innate and adaptive immunity. IL-23 may constitute with IL-17 an acute response to infection in peripheral tissues. IL-23 binds to a heterodimeric receptor complex composed of IL12RB1 and IL23R, activates the Jak-Stat signaling cascade, stimulates memory rather than naive T-cells and promotes production of pro-inflammatory cytokines. IL-23 induces autoimmune inflammation and thus may be responsible for autoimmune inflammatory diseases and may be important for tumorigenesis. In terms of biological role, associates with IL12B to form the pro-inflammatory cytokine IL-23 that plays different roles in innate and adaptive immunity. Released by antigen-presenting cells such as dendritic cells or macrophages, binds to a heterodimeric receptor complex composed of IL12RB1 and IL23R to activate JAK2 and TYK2 which then phosphorylate the receptor to form a docking site leading to the phosphorylation of STAT3 and STAT4. This process leads to activation of several pathways including p38 MAPK or NF-kappa-B and promotes the production of pro-inflammatory cytokines such as interleukin-17A/IL17A. In turn, participates in the early and effective intracellular bacterial clearance. Promotes the expansion and survival of T-helper 17 cells, a CD4-positive helper T-cell subset that produces IL-17, as well as other IL-17-producing cells. This is Interleukin-23 subunit alpha (Il23a) from Mus musculus (Mouse).